We begin with the raw amino-acid sequence, 81 residues long: RNA-binding protein Hfq (81 aa).

Positions 9–68 (DPFLNVLRRERVPVFIYLINGIKLQGEIESFDKFVILLRNTVNQMIYKHAISTIVPSRVV) constitute a Sm domain.

This sequence belongs to the Hfq family. In terms of assembly, homohexamer.

Functionally, RNA chaperone that binds small regulatory RNA (sRNAs) and mRNAs to facilitate mRNA translational regulation in response to envelope stress, environmental stress and changes in metabolite concentrations. Also binds with high specificity to tRNAs. This is RNA-binding protein Hfq from Blochmanniella pennsylvanica (strain BPEN).